We begin with the raw amino-acid sequence, 2224 residues long: Coagulation factor V (2224 aa).

Positions 1–28 (MFPGCPRLWVLVVLGTSWVGWGSQGTEA) are cleaved as a signal peptide. 4 consecutive Plastocyanin-like domains span residues 30–193 (QLRQ…LLIC), 203–329 (TQKT…IKNC), 348–526 (KRWE…LLIC), and 536–684 (IQRA…DVKC). F5/8 type A domains are found at residues 30 to 329 (QLRQ…IKNC) and 348 to 684 (KRWE…DVKC). Residues Asn51 and Asn55 are each glycosylated (N-linked (GlcNAc...) asparagine). Residues Asp139 and Asp140 each contribute to the Ca(2+) site. A disulfide bridge connects residues Cys167 and Cys193. N-linked (GlcNAc...) asparagine glycans are attached at residues Asn239, Asn297, Asn382, Asn460, and Asn468. A disulfide bridge links Cys248 with Cys329. A disulfide bridge connects residues Cys500 and Cys526. Residue Asn554 is glycosylated (N-linked (GlcNAc...) asparagine). A disulfide bridge connects residues Cys603 and Cys684. Thr640 carries the post-translational modification Phosphothreonine. The interval 692–1573 (SYEIFEPPES…PDNIAAWYLR (882 aa)) is b. Residues Tyr693, Tyr724, and Tyr726 each carry the sulfotyrosine modification. Positions 738–1573 (SFRNSSLNQE…PDNIAAWYLR (836 aa)) are cleaved as a propeptide — activation peptide (connecting region). N-linked (GlcNAc...) asparagine glycans are attached at residues Asn741, Asn752, Asn760, Asn776, and Asn782. An O-linked (GalNAc...) threonine glycan is attached at Thr805. An N-linked (GlcNAc...) asparagine glycan is attached at Asn821. Positions 822–831 (SSTAEHSSPY) are enriched in polar residues. Residues 822-842 (SSTAEHSSPYSEDPIEDPLQP) form a disordered region. At Ser859 the chain carries Phosphoserine; by FAM20C. Residues 894-927 (LSQDTGSPSGMRPWEDLPSQDTGSPSRMRPWKDP) form a disordered region. 2 repeat units span residues 895-911 (SQDTGSPSGMRPWEDLP) and 912-928 (SQDTGSPSRMRPWKDPP). The segment at 895 to 928 (SQDTGSPSGMRPWEDLPSQDTGSPSRMRPWKDPP) is 2 X 17 AA tandem repeats. Residues Asn938 and Asn977 are each glycosylated (N-linked (GlcNAc...) asparagine). 2 disordered regions span residues 982 to 1001 (WGESTPLANKPGKQSGHPKF) and 1029 to 1048 (TRKKKKEKHTHHAPLSPRTF). Basic residues predominate over residues 1029 to 1040 (TRKKKKEKHTHH). N-linked (GlcNAc...) asparagine glycans are attached at residues Asn1074, Asn1083, Asn1103, and Asn1106. Positions 1097 to 1157 (LPDHNQNSSN…SSSPELSEML (61 aa)) are disordered. Residues 1099–1111 (DHNQNSSNDTGQA) show a composition bias toward polar residues. Low complexity predominate over residues 1139 to 1154 (HSTSDPSHRSSSPELS). 35 consecutive repeat copies span residues 1185-1193 (VISPDLSQV), 1194-1202 (TLSPELSQT), 1203-1211 (NLSPDLSHT), 1212-1220 (TLSPELIQR), 1221-1229 (NLSPALGQM), 1230-1238 (PISPDLSHT), 1239-1247 (TLSPDLSHT), 1248-1256 (TLSLDLSQT), 1257-1265 (NLSPELSQT), 1266-1274 (NLSPALGQM), 1275-1283 (PLSPDLSHT), 1284-1292 (TLSLDFSQT), 1293-1301 (NLSPELSHM), 1302-1310 (TLSPELSQT), 1311-1319 (NLSPALGQM), 1320-1328 (PISPDLSHT), 1329-1337 (TLSLDFSQT), 1338-1346 (NLSPELSQT), 1347-1355 (NLSPALGQM), 1356-1364 (PLSPDPSHT), 1365-1373 (TLSLDLSQT), 1374-1382 (NLSPELSQT), 1383-1391 (NLSPDLSEM), 1392-1400 (PLFADLSQI), 1401-1409 (PLTPDLDQM), 1410-1418 (TLSPDLGET), 1419-1427 (DLSPNFGQM), 1428-1436 (SLSPDLSQV), 1437-1445 (TLSPDISDT), 1446-1454 (TLLPDLSQI), 1455-1463 (SPPPDLDQI), 1464-1472 (FYPSESSQS), 1473-1481 (LLLQEFNES), 1482-1490 (FPYPDLGQM), and 1493-1501 (PSSPTLNDT). Residues 1185–1501 (VISPDLSQVT…SPSSPTLNDT (317 aa)) are 35 X 9 AA approximate tandem repeats of [TNP]-L-S-P-D-L-S-Q-T. The segment at 1341–1367 (PELSQTNLSPALGQMPLSPDPSHTTLS) is disordered. N-linked (GlcNAc...) asparagine glycosylation is present at Asn1479. The N-linked (GlcNAc...) asparagine glycan is linked to Asn1499. Residues Tyr1522, Tyr1538, and Tyr1543 each carry the sulfotyrosine modification. N-linked (GlcNAc...) asparagine glycosylation is present at Asn1559. Plastocyanin-like domains are found at residues 1578–1751 (NRRN…LLIC) and 1761–1907 (NMPM…DRDC). One can recognise an F5/8 type A 3 domain in the interval 1578–1907 (NRRNYYIAAE…TPFLIMDRDC (330 aa)). Tyr1593 is modified (sulfotyrosine). Asn1703 carries an N-linked (GlcNAc...) asparagine glycan. A disulfide bridge links Cys1725 with Cys1751. Positions 1843 and 1845 each coordinate Cu cation. 2 disulfides stabilise this stretch: Cys1907–Cys2061 and Cys2066–Cys2221. F5/8 type C domains are found at residues 1907-2061 (CRMP…LQGC) and 2066-2221 (CSTP…LFGC). Residues Asn2010 and Asn2209 are each glycosylated (N-linked (GlcNAc...) asparagine).

The protein belongs to the multicopper oxidase family. In terms of assembly, factor Va, the activated form of factor V, is composed of a heavy chain and a light chain, non-covalently bound. The interaction between the two chains is calcium-dependent. Forms heterodimer with SERPINA5. Thrombin activates factor V proteolytically to the active cofactor, factor Va (formation of a heavy chain at the N-terminus and a light chain at the C-terminus). In terms of processing, sulfation is required for efficient thrombin cleavage and activation and for full procoagulant activity. Post-translationally, activated protein C inactivates factor V and factor Va by proteolytic degradation. Phosphorylated by FAM20C in the extracellular medium. As to expression, plasma.

The protein localises to the secreted. Inhibited by SERPINA5. Functionally, central regulator of hemostasis. It serves as a critical cofactor for the prothrombinase activity of factor Xa that results in the activation of prothrombin to thrombin. The protein is Coagulation factor V (F5) of Homo sapiens (Human).